Reading from the N-terminus, the 940-residue chain is AP-2 complex subunit alpha (940 aa).

A phosphoserine mark is found at Ser-632 and Ser-634. The segment covering 651-662 (SHSKLNNSNANT) has biased composition (polar residues). Residues 651–679 (SHSKLNNSNANTDLLGLSTPPSNNIGSGS) are disordered. The segment covering 668 to 679 (STPPSNNIGSGS) has biased composition (low complexity).

The protein belongs to the adaptor complexes large subunit family. Adaptor protein complex 2 (AP-2) is a heterotetramer composed of two large adaptins (alpha-type and beta-type subunits), a medium adaptin (mu-type subunit AP50) and a small adaptin (sigma-type subunit AP17). Expressed in the Garland cells, imaginal disks, adult midgut precursors, the antenno-maxillary complex, the endoderm, the fat bodies, and the visceral mesoderm and cells of the CNS and PNS including neuroblasts, the presumptive stomatogastric nervous system, and the lateral chordotonal sense organs.

It localises to the cell membrane. The protein localises to the membrane. The protein resides in the coated pit. In terms of biological role, adaptins are components of the adapter complexes which link clathrin to receptors in coated vesicles. Clathrin-associated protein complexes are believed to interact with the cytoplasmic tails of membrane proteins, leading to their selection and concentration. AP-2alpha is a subunit of the plasma membrane adapter. This chain is AP-2 complex subunit alpha (AP-2alpha), found in Drosophila melanogaster (Fruit fly).